The following is a 305-amino-acid chain: Glycine--tRNA ligase alpha subunit (305 aa).

This sequence belongs to the class-II aminoacyl-tRNA synthetase family. Tetramer of two alpha and two beta subunits.

The protein localises to the cytoplasm. The enzyme catalyses tRNA(Gly) + glycine + ATP = glycyl-tRNA(Gly) + AMP + diphosphate. The chain is Glycine--tRNA ligase alpha subunit from Streptococcus pneumoniae serotype 19F (strain G54).